Reading from the N-terminus, the 343-residue chain is Anthranilate phosphoribosyltransferase (343 aa).

5-phospho-alpha-D-ribose 1-diphosphate contacts are provided by residues Gly81, 84–85 (GD), 91–94 (NLST), 109–117 (KHGNRSVSS), and Ser121. Gly81 provides a ligand contact to anthranilate. Mg(2+) is bound at residue Ser93. Position 112 (Asn112) interacts with anthranilate. Arg167 lines the anthranilate pocket. 2 residues coordinate Mg(2+): Asp226 and Glu227.

The protein belongs to the anthranilate phosphoribosyltransferase family. In terms of assembly, homodimer. The cofactor is Mg(2+).

The catalysed reaction is N-(5-phospho-beta-D-ribosyl)anthranilate + diphosphate = 5-phospho-alpha-D-ribose 1-diphosphate + anthranilate. The protein operates within amino-acid biosynthesis; L-tryptophan biosynthesis; L-tryptophan from chorismate: step 2/5. Functionally, catalyzes the transfer of the phosphoribosyl group of 5-phosphorylribose-1-pyrophosphate (PRPP) to anthranilate to yield N-(5'-phosphoribosyl)-anthranilate (PRA). This is Anthranilate phosphoribosyltransferase from Cellvibrio japonicus (strain Ueda107) (Pseudomonas fluorescens subsp. cellulosa).